A 126-amino-acid polypeptide reads, in one-letter code: UPF0102 protein TP_0913 (126 aa).

Belongs to the UPF0102 family.

The polypeptide is UPF0102 protein TP_0913 (Treponema pallidum (strain Nichols)).